A 64-amino-acid polypeptide reads, in one-letter code: Large ribosomal subunit protein bL35 (64 aa).

A disordered region spans residues 27–47; the sequence is MNGSHNLEKKNRKRSRRLHQA. A compositionally biased stretch (basic residues) spans 36 to 45; sequence KNRKRSRRLH.

This sequence belongs to the bacterial ribosomal protein bL35 family.

This chain is Large ribosomal subunit protein bL35, found in Chlorobium phaeobacteroides (strain DSM 266 / SMG 266 / 2430).